A 534-amino-acid chain; its full sequence is EH domain-containing protein 1 (534 aa).

Met-1 carries the N-acetylmethionine modification. Positions 55–286 (FDNKPMVLLV…DLFKDIQSLP (232 aa)) constitute a Dynamin-type G domain. Residues 65-72 (GQYSTGKT) are G1 motif. An ATP-binding site is contributed by 65–72 (GQYSTGKT). Positions 91 to 92 (EP) are G2 motif. The G3 motif stretch occupies residues 153–156 (DTPG). The stretch at 198–227 (DEFSEVIKALKNHEDKIRVVLNKADQIETQ) forms a coiled coil. Positions 219 to 222 (NKAD) are G4 motif. Residue Lys-220 participates in ATP binding. A region of interest (G5 motif) is located at residue Ile-243. Residue Trp-258 coordinates ATP. In terms of domain architecture, EH spans 444–532 (DKPTYDEIFY…PHLVPPSKRR (89 aa)). A Phosphoserine modification is found at Ser-456. Residues 476–511 (LPNTVLGKIWKLADVDRDGLLDDEEFALANHLIKVK) enclose the EF-hand domain. Residues Asp-489, Asp-491, Asp-493, and Glu-500 each contribute to the Ca(2+) site.

The protein belongs to the TRAFAC class dynamin-like GTPase superfamily. Dynamin/Fzo/YdjA family. EHD subfamily. As to quaternary structure, homooligomer, and heterooligomer with EHD2, EHD3 and EHD4, ATP-binding is required for heterooligomerization. Interacts (via EH domain) with MICALL1 (via NPF1 motif); the interaction is direct and recruits EHD1 to membranes. Interacts with RAB35; the interaction is indirect through MICALL1 and recruits EHD1 to membranes. Interacts (via EH domain) with PACSIN2 (via NPF motifs); regulates localization to tubular recycling endosome membranes. Interacts with PACSIN1. Interacts with RAB8A. Interacts with FER1L5 (via second C2 domain). Interacts with MYOF. Interacts with ZFYVE20. Interacts (via EH domain) with RAB11FIP2.

It is found in the recycling endosome membrane. The protein localises to the early endosome membrane. It localises to the cell membrane. Its subcellular location is the cell projection. The protein resides in the cilium membrane. In terms of biological role, ATP- and membrane-binding protein that controls membrane reorganization/tubulation upon ATP hydrolysis. Acts in early endocytic membrane fusion and membrane trafficking of recycling endosomes. Recruited to endosomal membranes upon nerve growth factor stimulation, indirectly regulates neurite outgrowth. Plays a role in myoblast fusion. Involved in the unidirectional retrograde dendritic transport of endocytosed BACE1 and in efficient sorting of BACE1 to axons implicating a function in neuronal APP processing. Plays a role in the formation of the ciliary vesicle (CV), an early step in cilium biogenesis. Proposed to be required for the fusion of distal appendage vesicles (DAVs) to form the CV by recruiting SNARE complex component SNAP29. Is required for recruitment of transition zone proteins CEP290, RPGRIP1L, TMEM67 and B9D2, and of IFT20 following DAV reorganization before Rab8-dependent ciliary membrane extension. Required for the loss of CCP110 form the mother centriole essential for the maturation of the basal body during ciliogenesis. This chain is EH domain-containing protein 1, found in Bos taurus (Bovine).